Consider the following 536-residue polypeptide: Anthranilate synthase component 1 2 (536 aa).

L-tryptophan-binding positions include S59 and P299–M301. G334–T335 contributes to the chorismate binding site. Position 361 (E361) interacts with Mg(2+). Chorismate is bound by residues Y449, R469, G487–G489, and G489. E502 lines the Mg(2+) pocket.

The protein belongs to the anthranilate synthase component I family. Tetramer of two components I and two components II. Mg(2+) is required as a cofactor.

It catalyses the reaction chorismate + L-glutamine = anthranilate + pyruvate + L-glutamate + H(+). Its pathway is amino-acid biosynthesis; L-tryptophan biosynthesis; L-tryptophan from chorismate: step 1/5. The sequence is that of Anthranilate synthase component 1 2 (trpE2) from Haloarcula marismortui (strain ATCC 43049 / DSM 3752 / JCM 8966 / VKM B-1809) (Halobacterium marismortui).